We begin with the raw amino-acid sequence, 173 residues long: MSSGNETVLIGKVSATHGVRGQLRITPFSGDVDSLLTLRSIMVKKPGGEMEIFAVAASKAHGKKVIITLKAFDNINQVLHLVGRELYALREQLPELPEDEYYWCDLLGLQVVTEEGESLGELVDIIVTGSNDVYVVQGSGREILIPALADVVLDVDSDAKRMTVSLPEGLLDL.

The region spanning 98–170 is the PRC barrel domain; it reads EDEYYWCDLL…RMTVSLPEGL (73 aa).

Belongs to the RimM family. Binds ribosomal protein uS19.

The protein resides in the cytoplasm. Functionally, an accessory protein needed during the final step in the assembly of 30S ribosomal subunit, possibly for assembly of the head region. Essential for efficient processing of 16S rRNA. May be needed both before and after RbfA during the maturation of 16S rRNA. It has affinity for free ribosomal 30S subunits but not for 70S ribosomes. The sequence is that of Ribosome maturation factor RimM from Geotalea uraniireducens (strain Rf4) (Geobacter uraniireducens).